A 495-amino-acid chain; its full sequence is Catalase (495 aa).

A disordered region spans residues 1-25 (MSNNKKLTSLFGAPVSDRENSMTAG). Catalysis depends on residues His55 and Asn128. Tyr338 provides a ligand contact to heme.

Belongs to the catalase family. As to quaternary structure, homodimer. It depends on heme as a cofactor.

It carries out the reaction 2 H2O2 = O2 + 2 H2O. In terms of biological role, decomposes hydrogen peroxide into water and oxygen; serves to protect cells from the toxic effects of hydrogen peroxide. The chain is Catalase (katA) from Staphylococcus saprophyticus subsp. saprophyticus (strain ATCC 15305 / DSM 20229 / NCIMB 8711 / NCTC 7292 / S-41).